A 572-amino-acid polypeptide reads, in one-letter code: Phosphoenolpyruvate-protein phosphotransferase (572 aa).

Catalysis depends on His-190, which acts as the Tele-phosphohistidine intermediate. The phosphoenolpyruvate site is built by Arg-297 and Arg-333. Mg(2+) contacts are provided by Glu-432 and Asp-456. Phosphoenolpyruvate contacts are provided by residues 455 to 456 (ND) and Arg-466. Cys-503 acts as the Proton donor in catalysis.

It belongs to the PEP-utilizing enzyme family. In terms of assembly, homodimer. It depends on Mg(2+) as a cofactor.

Its subcellular location is the cytoplasm. It carries out the reaction L-histidyl-[protein] + phosphoenolpyruvate = N(pros)-phospho-L-histidyl-[protein] + pyruvate. General (non sugar-specific) component of the phosphoenolpyruvate-dependent sugar phosphotransferase system (sugar PTS). This major carbohydrate active-transport system catalyzes the phosphorylation of incoming sugar substrates concomitantly with their translocation across the cell membrane. Enzyme I transfers the phosphoryl group from phosphoenolpyruvate (PEP) to the phosphoryl carrier protein (HPr). The sequence is that of Phosphoenolpyruvate-protein phosphotransferase (ptsI) from Listeria innocua serovar 6a (strain ATCC BAA-680 / CLIP 11262).